We begin with the raw amino-acid sequence, 323 residues long: Lipoyl synthase (323 aa).

C56, C61, C67, C82, C86, C89, and S293 together coordinate [4Fe-4S] cluster. The region spanning 68–282 (WEDREATFLI…AAEARELGFA (215 aa)) is the Radical SAM core domain.

The protein belongs to the radical SAM superfamily. Lipoyl synthase family. Requires [4Fe-4S] cluster as cofactor.

The protein localises to the cytoplasm. The enzyme catalyses [[Fe-S] cluster scaffold protein carrying a second [4Fe-4S](2+) cluster] + N(6)-octanoyl-L-lysyl-[protein] + 2 oxidized [2Fe-2S]-[ferredoxin] + 2 S-adenosyl-L-methionine + 4 H(+) = [[Fe-S] cluster scaffold protein] + N(6)-[(R)-dihydrolipoyl]-L-lysyl-[protein] + 4 Fe(3+) + 2 hydrogen sulfide + 2 5'-deoxyadenosine + 2 L-methionine + 2 reduced [2Fe-2S]-[ferredoxin]. Its pathway is protein modification; protein lipoylation via endogenous pathway; protein N(6)-(lipoyl)lysine from octanoyl-[acyl-carrier-protein]: step 2/2. In terms of biological role, catalyzes the radical-mediated insertion of two sulfur atoms into the C-6 and C-8 positions of the octanoyl moiety bound to the lipoyl domains of lipoate-dependent enzymes, thereby converting the octanoylated domains into lipoylated derivatives. The polypeptide is Lipoyl synthase (Acidothermus cellulolyticus (strain ATCC 43068 / DSM 8971 / 11B)).